A 527-amino-acid chain; its full sequence is Heat shock factor protein HSF8 (527 aa).

The DNA-binding element occupies 39–133 (PFLVKTYDMV…KSISRRKPAH (95 aa)). Disordered regions lie at residues 128-158 (RRKPAHGHAQQQQQPHGNAQQQMQPPGHSAS), 241-273 (NESNKRIAEGSKKRRIKQDIESQDPSVTPADGQ), and 297-341 (SSPR…TSGK). Positions 134 to 152 (GHAQQQQQPHGNAQQQMQP) are enriched in low complexity. Polar residues predominate over residues 317–326 (SPQSNASSGR).

Belongs to the HSF family. In terms of assembly, homotrimer. In terms of processing, exhibits temperature-dependent phosphorylation.

The protein resides in the nucleus. Its function is as follows. DNA-binding protein that specifically binds heat shock promoter elements (HSE) and activates transcription. This is Heat shock factor protein HSF8 (HSF8) from Solanum lycopersicum (Tomato).